The chain runs to 69 residues: Large ribosomal subunit protein bL31 (69 aa).

Cys16, Cys18, Cys36, and Cys39 together coordinate Zn(2+).

The protein belongs to the bacterial ribosomal protein bL31 family. Type A subfamily. In terms of assembly, part of the 50S ribosomal subunit. Zn(2+) serves as cofactor.

Functionally, binds the 23S rRNA. This Kosmotoga olearia (strain ATCC BAA-1733 / DSM 21960 / TBF 19.5.1) protein is Large ribosomal subunit protein bL31.